A 214-amino-acid chain; its full sequence is LexA repressor (214 aa).

Positions 28 to 48 (IRDIQRELSISSTSVVAYNLR) form a DNA-binding region, H-T-H motif. Active-site for autocatalytic cleavage activity residues include S133 and K172.

This sequence belongs to the peptidase S24 family. As to quaternary structure, homodimer.

The catalysed reaction is Hydrolysis of Ala-|-Gly bond in repressor LexA.. Functionally, represses a number of genes involved in the response to DNA damage (SOS response), including recA and lexA. In the presence of single-stranded DNA, RecA interacts with LexA causing an autocatalytic cleavage which disrupts the DNA-binding part of LexA, leading to derepression of the SOS regulon and eventually DNA repair. In Herpetosiphon aurantiacus (strain ATCC 23779 / DSM 785 / 114-95), this protein is LexA repressor.